The following is a 101-amino-acid chain: RNA-binding protein Hfq (101 aa).

The Sm domain occupies 9 to 68; the sequence is DPFLNALRRERVPVSIYLVNGIKLQGQVESFDQFVILLKNTVSQMVYKHAISTVVPSRPV. The interval 63-101 is disordered; the sequence is VPSRPVSHHSNNPSGSTNNYHGSNPSAPQQPQQDSDDAE. The segment covering 70–86 has biased composition (polar residues); the sequence is HHSNNPSGSTNNYHGSN.

It belongs to the Hfq family. As to quaternary structure, homohexamer.

In terms of biological role, RNA chaperone that binds small regulatory RNA (sRNAs) and mRNAs to facilitate mRNA translational regulation in response to envelope stress, environmental stress and changes in metabolite concentrations. Also binds with high specificity to tRNAs. Positively regulates the expression of the yst gene for heat-stable enterotoxin (Y-ST). This chain is RNA-binding protein Hfq, found in Yersinia enterocolitica.